The sequence spans 464 residues: Protein transport protein HofB homolog (464 aa).

264 to 271 is a binding site for ATP; the sequence is GPTGSGKS.

This sequence belongs to the GSP E family.

In Haemophilus influenzae (strain ATCC 51907 / DSM 11121 / KW20 / Rd), this protein is Protein transport protein HofB homolog (hofB).